The following is a 439-amino-acid chain: Prenyltransferase iacE (439 aa).

Residues 88-89, Glu97, Arg112, Lys198, Tyr200, Arg271, Lys273, and Tyr275 contribute to the substrate site; that span reads WI.

It belongs to the tryptophan dimethylallyltransferase family.

The catalysed reaction is siccayne + dimethylallyl diphosphate = pestalodiol + diphosphate. It functions in the pathway secondary metabolite biosynthesis. Functionally, prenyltransferase; part of the gene cluster that mediates the biosynthesis of iso-A82775C, a enylepoxycyclohexane and biosynthetic precursor of the chloropestolide anticancer natural products. Within the cluster, the prenyltransferase iacE prenylates siccayne to generate pestalodiol E, using dimethylallyl diphosphate (DMAPP) as cosubstrate. The probable oxidoreductase iacF is then involved in the epoxidation of pestalodiol F to pestalodiol F, which is further converted to pestalofone A by the short-chain dehydrogenase/reductase iacG. Iso-A82775C is subsequently generated from pestalofone A by the short-chain dehydrogenase/reductase iacC. Iso-A82775C is further condensed with maldoxin via a Diels-Alder reaction to produce the anticancer natural products chloropestolides A to E. This is Prenyltransferase iacE from Pestalotiopsis fici (strain W106-1 / CGMCC3.15140).